The chain runs to 330 residues: Trans-1,2-dihydrobenzene-1,2-diol dehydrogenase (330 aa).

This sequence belongs to the Gfo/Idh/MocA family. In terms of assembly, homodimer.

The catalysed reaction is (1R,2R)-1,2-dihydrobenzene-1,2-diol + NADP(+) = catechol + NADPH + H(+). It carries out the reaction D-xylose + NADP(+) = D-xylono-1,5-lactone + NADPH + H(+). This chain is Trans-1,2-dihydrobenzene-1,2-diol dehydrogenase (dhdh), found in Xenopus tropicalis (Western clawed frog).